The following is a 284-amino-acid chain: MKLVIVSGRSGSGKSVALRVLEDLGYYCVDNLPLPLIGSLLEQLKGSNDLVAISVDVRNMPEQDKVLVQQLSNLPAGTEITSFFLNSSDKVLLKRYSETRRLHPLSKSRVSLQEAIKLEGKLLEPMSKLVDHYIDTSNLNIYDLSDQVRQILLGSVDKELVIYFESFGFKNGMPTEADFMFDVRFLPNPHWELALRPLTGLDEPVAEFLNRQPLVNKFIWQIENLLETWLPHLERNNRSYLTIAIGCTGGQHRSVYVAEQLAKRFSNGKHKVNVRHRELDHAKA.

ATP is bound at residue 8–15 (GRSGSGKS). Position 56-59 (56-59 (DVRN)) interacts with GTP.

It belongs to the RapZ-like family.

In terms of biological role, displays ATPase and GTPase activities. This is Nucleotide-binding protein Sputw3181_3461 from Shewanella sp. (strain W3-18-1).